The primary structure comprises 475 residues: Beta-amyrin 16-alpha-hydroxylase CYP87D16 (475 aa).

The chain crosses the membrane as a helical span at residues 3-23 (VVGLIGVAVVTILITQYVYKW). Residue Cys423 coordinates heme.

Belongs to the cytochrome P450 family. Heme serves as cofactor.

It localises to the membrane. It catalyses the reaction beta-amyrin + reduced [NADPH--hemoprotein reductase] + O2 = 16alpha-hydroxy-beta-amyrin + oxidized [NADPH--hemoprotein reductase] + H2O + H(+). In terms of biological role, involved in the biosynthetic pathway of maesasaponins, which are oleanane-type saponins with diverse biological activities. Catalyzes the C-16alpha oxidation of beta-amyrin to form 16alpha-hydroxy-beta-amyrin. The chain is Beta-amyrin 16-alpha-hydroxylase CYP87D16 from Maesa lanceolata (False assegai).